A 273-amino-acid polypeptide reads, in one-letter code: Ribosomal RNA small subunit methyltransferase A (273 aa).

S-adenosyl-L-methionine is bound by residues Asn18, Leu20, Gly45, Glu66, Asp91, and Asn113.

Belongs to the class I-like SAM-binding methyltransferase superfamily. rRNA adenine N(6)-methyltransferase family. RsmA subfamily.

The protein resides in the cytoplasm. It carries out the reaction adenosine(1518)/adenosine(1519) in 16S rRNA + 4 S-adenosyl-L-methionine = N(6)-dimethyladenosine(1518)/N(6)-dimethyladenosine(1519) in 16S rRNA + 4 S-adenosyl-L-homocysteine + 4 H(+). Its function is as follows. Specifically dimethylates two adjacent adenosines (A1518 and A1519) in the loop of a conserved hairpin near the 3'-end of 16S rRNA in the 30S particle. May play a critical role in biogenesis of 30S subunits. This is Ribosomal RNA small subunit methyltransferase A from Escherichia coli (strain 55989 / EAEC).